Reading from the N-terminus, the 445-residue chain is GTPase Der (445 aa).

EngA-type G domains lie at 3–167 (PVIA…NLPD) and 180–353 (IKLA…ASAN). Residues 9-16 (GRPNVGKS), 56-60 (DTGGF), 119-122 (NKAE), 186-193 (GRPNVGKS), 233-237 (DTAGL), and 298-301 (NKWD) contribute to the GTP site. In terms of domain architecture, KH-like spans 354-438 (RKMSTPVLTR…PLRIQLKSSV (85 aa)).

It belongs to the TRAFAC class TrmE-Era-EngA-EngB-Septin-like GTPase superfamily. EngA (Der) GTPase family. As to quaternary structure, associates with the 50S ribosomal subunit.

In terms of biological role, GTPase that plays an essential role in the late steps of ribosome biogenesis. The sequence is that of GTPase Der from Polaromonas naphthalenivorans (strain CJ2).